The chain runs to 369 residues: Phospho-N-acetylmuramoyl-pentapeptide-transferase (369 aa).

A run of 10 helical transmembrane segments spans residues 3 to 23 (ALLG…PLFI), 53 to 73 (GGIV…LLTW), 81 to 101 (VTPS…VGFL), 118 to 138 (WQKI…AITL), 162 to 182 (FMAL…CLIV), 198 to 218 (LAAG…FWQF), 240 to 260 (PLDL…FLWW), 267 to 287 (IFMG…LAIL), 290 to 310 (TELL…SVVL), and 347 to 367 (FWII…LEWI).

This sequence belongs to the glycosyltransferase 4 family. MraY subfamily. It depends on Mg(2+) as a cofactor.

It localises to the cell membrane. It carries out the reaction UDP-N-acetyl-alpha-D-muramoyl-L-alanyl-gamma-D-glutamyl-meso-2,6-diaminopimeloyl-D-alanyl-D-alanine + di-trans,octa-cis-undecaprenyl phosphate = di-trans,octa-cis-undecaprenyl diphospho-N-acetyl-alpha-D-muramoyl-L-alanyl-D-glutamyl-meso-2,6-diaminopimeloyl-D-alanyl-D-alanine + UMP. It functions in the pathway cell wall biogenesis; peptidoglycan biosynthesis. Catalyzes the initial step of the lipid cycle reactions in the biosynthesis of the cell wall peptidoglycan: transfers peptidoglycan precursor phospho-MurNAc-pentapeptide from UDP-MurNAc-pentapeptide onto the lipid carrier undecaprenyl phosphate, yielding undecaprenyl-pyrophosphoryl-MurNAc-pentapeptide, known as lipid I. This Clavibacter sepedonicus (Clavibacter michiganensis subsp. sepedonicus) protein is Phospho-N-acetylmuramoyl-pentapeptide-transferase.